The following is a 204-amino-acid chain: Tumor necrosis factor receptor superfamily member 26 (204 aa).

The N-terminal stretch at 1-19 is a signal peptide; sequence MTRLRLLLLLGLLLRVAVC. The Extracellular segment spans residues 20-164; sequence SVNTITLCKI…SQCFCFSKPL (145 aa). 9 disulfides stabilise this stretch: Cys27–Cys38, Cys39–Cys52, Cys42–Cys61, Cys64–Cys79, Cys82–Cys95, Cys85–Cys103, Cys105–Cys120, Cys123–Cys135, and Cys126–Cys143. 3 TNFR-Cys repeats span residues 27–61, 63–103, and 104–143; these read CKIG…KSEC, PCDS…DRVC, and QCKQ…DTVC. Asn57 is a glycosylation site (N-linked (GlcNAc...) asparagine). A glycan (N-linked (GlcNAc...) asparagine) is linked at Asn136. Residues 165-185 traverse the membrane as a helical segment; sequence GIVVIIAAFIIIIGAVIILIL. Residues 186-204 are Cytoplasmic-facing; that stretch reads KIICYCKRGENIQLSSTML.

As to expression, expressed in thymus and spleen. Detectable levels in lung.

Its subcellular location is the membrane. The polypeptide is Tumor necrosis factor receptor superfamily member 26 (Tnfrsf26) (Mus musculus (Mouse)).